The sequence spans 469 residues: Protein translocase subunit SecY (469 aa).

The Cytoplasmic portion of the chain corresponds to 1–20 (MSFIDSLATLGQYLPAVTKP). A helical membrane pass occupies residues 21-47 (KEKPSLGQKLVWSLVAVIIYLIMASTP). Over 48–59 (LYGITSASFFKN) the chain is Extracellular. The helical intramembrane region spans 60–67 (LILEQIIF). A discontinuously helical membrane pass occupies residues 60 to 88 (LILEQIIFASTTGTLAQLGIGPIITAGLI). Residues 68 to 79 (ASTTGTLAQLGI) lie within the membrane without spanning it. An intramembrane region (helical) is located at residues 80-88 (GPIITAGLI). Residues 89-109 (MQILAGSKLISIDLNDPDDRV) are Cytoplasmic-facing. The chain crosses the membrane as a helical span at residues 110–131 (KFTEAQKGLAFIFILVESALFG). Over 132 to 146 (YVLARTSTTINASIL) the chain is Extracellular. The helical transmembrane segment at 147 to 171 (FIAGIVIAQLIVATYLILLLDELIQ) threads the bilayer. Residues 172 to 178 (KGWGLGS) are Cytoplasmic-facing. The helical transmembrane segment at 179–197 (GVSLFILAGVMKIMFWDMF) threads the bilayer. The Extracellular portion of the chain corresponds to 198 to 240 (GIASVSSQNLPIGFFPALFTALASHSDVLNLIVNTSTKNLFQP). A helical transmembrane segment spans residues 241–262 (DLVGLVTTIALIIITIYLTTMT). Over 263-287 (IEIPVTSQKLRGIRRTIPLNFLYVS) the chain is Cytoplasmic. The helical transmembrane segment at 288–309 (SIPVIFVAVLGSDIQLFASLAS) threads the bilayer. Residues 310–347 (YVSPSASNILNTVSGVFFFPPPNSAIPHSIYAVVLDPL) lie on the Extracellular side of the membrane. A helical membrane pass occupies residues 348–367 (GALEYAVVFIVLSILFGILW). Residues 368–410 (VDVAGLDPATQAQQLVEAGIEIPGVRNNPKIIEGILARYIYPL) are Cytoplasmic-facing. A helical transmembrane segment spans residues 411–429 (AFFSSIIVGLIAVFATLLG). The Extracellular segment spans residues 430–432 (AYG). A helical transmembrane segment spans residues 433–447 (TGIGILLAVTIAIQY). Over 448–469 (YSLLAYERSLEMYPLLKRLIGE) the chain is Cytoplasmic.

This sequence belongs to the SecY/SEC61-alpha family. As to quaternary structure, component of the Sec protein translocase complex. Heterotrimer consisting of alpha (SecY), beta (SecG) and gamma (SecE) subunits. The heterotrimers can form oligomers, although 1 heterotrimer is thought to be able to translocate proteins. Interacts with the ribosome. May interact with SecDF, and other proteins may be involved.

The protein localises to the cell membrane. In terms of biological role, the central subunit of the protein translocation channel SecYEG. Consists of two halves formed by TMs 1-5 and 6-10. These two domains form a lateral gate at the front which open onto the bilayer between TMs 2 and 7, and are clamped together by SecE at the back. The channel is closed by both a pore ring composed of hydrophobic SecY resides and a short helix (helix 2A) on the extracellular side of the membrane which forms a plug. The plug probably moves laterally to allow the channel to open. The ring and the pore may move independently. This chain is Protein translocase subunit SecY, found in Saccharolobus solfataricus (strain ATCC 35092 / DSM 1617 / JCM 11322 / P2) (Sulfolobus solfataricus).